Consider the following 478-residue polypeptide: Alcohol dehydrogenase (quinone), cytochrome c subunit (478 aa).

Positions 1-36 (MLNALTRDRLVSEMKQGWKLAAAIGLMAVSFGAAHA) are cleaved as a signal peptide. Glutamine 37 is modified (pyrrolidone carboxylic acid). Cytochrome c domains lie at 42–145 (ALIK…MHGV), 189–304 (PEVA…KSMP), and 327–417 (GQGN…RKGW). Positions 56, 59, 60, 204, 207, 208, 340, 343, and 344 each coordinate heme c.

As to quaternary structure, the alcohol dehydrogenase multicomponent enzyme system is composed of a dehydrogenase subunit I (AdhA), a cytochrome c subunit II (AdhB) and a subunit III (AdhS). The cofactor is heme c.

Its subcellular location is the cell membrane. The enzyme catalyses ethanol + a ubiquinone = a ubiquinol + acetaldehyde. With respect to regulation, 2,6-dichloro-4-dicyanovinylphenol (PC16) and antimycin A inhibit ubiquinol oxidation activity more selectively than the ubiquinone reductase activity. Cytochrome c component of the alcohol dehydrogenase multicomponent enzyme system which is involved in the production of acetic acid and in the ethanol oxidase respiratory chain. Quinohemoprotein alcohol dehydrogenase (ADH) catalyzes the oxidation of ethanol to acetaldehyde by transferring electrons to the ubiquinone embedded in the membrane phospholipids. The electrons transfer from ethanol to membranous ubiquinone occurs from pyrroloquinoline quinone (PQQ) to one heme c in subunit I (AdhA), and finally to two heme c in subunit II (AdhB). Besides ubiquinone reduction, ADH also has a ubiquinol (QH2) oxidation reaction which mediates electron transfer from ubiquinol to the non-energy generating bypass oxidase system. The electrons transfer occurs from ubiquinol (QH2) to the additional heme c within subunit II (AdhB). Also able to use quinone analogs such as 2,3-dimethoxy-5-methyl-6-n-decyl-1,4-benzoquinone (DB) and 2,3-dimethoxy-5-methyl-6-n-pentyl-1,4-benzoquinone (PB). The protein is Alcohol dehydrogenase (quinone), cytochrome c subunit of Gluconobacter oxydans (strain 621H) (Gluconobacter suboxydans).